A 204-amino-acid chain; its full sequence is tRNA (pseudouridine(54)-N(1))-methyltransferase (204 aa).

Residues leucine 130, glycine 157, 180–185 (LSPLEL), and cysteine 190 contribute to the S-adenosyl-L-methionine site.

The protein belongs to the methyltransferase superfamily. TrmY family. As to quaternary structure, homodimer.

The protein resides in the cytoplasm. The enzyme catalyses pseudouridine(54) in tRNA + S-adenosyl-L-methionine = N(1)-methylpseudouridine(54) in tRNA + S-adenosyl-L-homocysteine + H(+). Its function is as follows. Specifically catalyzes the N1-methylation of pseudouridine at position 54 (Psi54) in tRNAs. The protein is tRNA (pseudouridine(54)-N(1))-methyltransferase of Methanococcus aeolicus (strain ATCC BAA-1280 / DSM 17508 / OCM 812 / Nankai-3).